Consider the following 898-residue polypeptide: DNA-directed DNA polymerase (898 aa).

The tract at residues 101 to 337 (YDRKFVRVAN…VQAIDKIRGF (237 aa)) is 3'-5'exonuclease. Positions 112, 114, and 219 each coordinate Mg(2+). A beta hairpin region spans residues 245-261 (VKSKLIQNMYGSKEIYS). The Mg(2+) site is built by aspartate 324, aspartate 408, and leucine 409. The segment at 377–898 (IPQQGSHVKQ…EKASLDFLFG (522 aa)) is polymerase. Substrate-binding positions include 411–413 (SLY), arginine 479, and lysine 557. A Mg(2+)-binding site is contributed by aspartate 620. The tract at residues 702 to 705 (KKRY) is binding of DNA in B-conformation. Positions 893 to 898 (LDFLFG) are interaction with the polymerase clamp.

This sequence belongs to the DNA polymerase type-B family. As to quaternary structure, interacts with the polymerase clamp; this interaction constitutes the polymerase holoenzyme. Interacts with the helicase assembly factor. Part of the replicase complex that includes the DNA polymerase, the polymerase clamp, the clamp loader complex, the single-stranded DNA binding protein, the primase, the helicase and the helicase assembly factor. Mg(2+) is required as a cofactor.

The catalysed reaction is DNA(n) + a 2'-deoxyribonucleoside 5'-triphosphate = DNA(n+1) + diphosphate. Functionally, replicates the viral genomic DNA. This polymerase possesses two enzymatic activities: DNA synthesis (polymerase) and an exonucleolytic activity that degrades single-stranded DNA in the 3'- to 5'-direction for proofreading purpose. The chain is DNA-directed DNA polymerase (43) from Enterobacteria phage T4 (Bacteriophage T4).